A 183-amino-acid polypeptide reads, in one-letter code: ATP synthase subunit delta (183 aa).

It belongs to the ATPase delta chain family. As to quaternary structure, F-type ATPases have 2 components, F(1) - the catalytic core - and F(0) - the membrane proton channel. F(1) has five subunits: alpha(3), beta(3), gamma(1), delta(1), epsilon(1). CF(0) has four main subunits: a(1), b(1), b'(1) and c(10-14). The alpha and beta chains form an alternating ring which encloses part of the gamma chain. F(1) is attached to F(0) by a central stalk formed by the gamma and epsilon chains, while a peripheral stalk is formed by the delta, b and b' chains.

The protein localises to the cellular thylakoid membrane. F(1)F(0) ATP synthase produces ATP from ADP in the presence of a proton or sodium gradient. F-type ATPases consist of two structural domains, F(1) containing the extramembraneous catalytic core and F(0) containing the membrane proton channel, linked together by a central stalk and a peripheral stalk. During catalysis, ATP synthesis in the catalytic domain of F(1) is coupled via a rotary mechanism of the central stalk subunits to proton translocation. Its function is as follows. This protein is part of the stalk that links CF(0) to CF(1). It either transmits conformational changes from CF(0) to CF(1) or is implicated in proton conduction. This Prochlorococcus marinus (strain SARG / CCMP1375 / SS120) protein is ATP synthase subunit delta.